A 346-amino-acid chain; its full sequence is Zinc finger CCCH domain-containing protein 28 (346 aa).

The tract at residues 1 to 99 is disordered; sequence MASAETPNPD…SPRYPDGKRR (99 aa). The segment covering 17–41 has biased composition (low complexity); it reads DAAAAADPAAAAPAAAATDPAAAGS. Basic residues predominate over residues 62-86; that stretch reads RSSRSRSRSPRRGRSRSRSRSRSRG. 6 C3H1-type zinc fingers span residues 103 to 131, 138 to 165, 181 to 209, 211 to 237, 282 to 308, and 314 to 340; these read DLNV…HPHP, DSKV…HPPP, KVKM…HHSP, EDCA…HVMA, NYGV…HPDL, and NTQV…HPPA.

The polypeptide is Zinc finger CCCH domain-containing protein 28 (Oryza sativa subsp. japonica (Rice)).